We begin with the raw amino-acid sequence, 357 residues long: MRAVSQTSPNRLAEALSSPHMLKEMLDLFGHEYLPVFEGEIKPHGPLGTSDSRAKRPLNAFMAFRTYYLKLFPDTQQKNASGFLTQLWGGDPHRNKWALIAKVYSFLRDQLGKGPVNLSAFLGIACPLMNMVEPSIYIEVLGWEQTAPQGIVTFQQNTDIMKANLARLFNVHPTTEIDLLTSILSAGYFTDFSQVLLMRMWACQNGIMTTTSATAGNNVATTQPLYESVPTTAEKVSFINAVRESRNLAAHDLFGPEYDAAFFGNRFVHSWEVQDLTSFQNVQISVADSPMESNTLYNFRMPSQCLPQVSEFDLYDVIDTSIIDISSAWSIDQYLHEKQSKMQQQCKYFLFRNSDCS.

The alpha box DNA-binding region spans 53-108 (RAKRPLNAFMAFRTYYLKLFPDTQQKNASGFLTQLWGGDPHRNKWALIAKVYSFLR).

The protein belongs to the MATALPHA1 family.

The protein resides in the nucleus. In terms of biological role, mating type proteins are sequence specific DNA-binding proteins that act as master switches in fungal differentiation by controlling gene expression in a cell type-specific fashion. Transcriptional activator that induces the transcription of alpha-specific genes. This chain is Mating-type protein MAT-1 (MAT1), found in Fusarium oxysporum (Fusarium vascular wilt).